The primary structure comprises 110 residues: MSGVWVFKNGVIRLVENPNQSGSDTQNRRKVMVYLPTGEVVSSYSTLEQILQSLGWERYFGGGDTDLLQFHKRSSIDLISLPRDFTKFNSVYMYDIVVKNPNYFHVRDSH.

This sequence belongs to the FPF1 family.

In terms of biological role, modulates the competence to flowering of apical meristems. Involved in a GA-dependent response in apical meristems during the transition to flowering. The polypeptide is Flowering-promoting factor 1 (FPF1) (Arabidopsis thaliana (Mouse-ear cress)).